A 387-amino-acid polypeptide reads, in one-letter code: Patatin-08 (387 aa).

The N-terminal stretch at 1–23 is a signal peptide; sequence MATTKSFLILIVMILATTSSTFA. Residues 32–230 form the PNPLA domain; it reads LSIDGGGIKG…TVADPALLSI (199 aa). The short motif at 36 to 41 is the GXGXXG element; the sequence is GGGIKG. The GXSXG motif lies at 75–79; sequence GTSTG. Residue Ser-77 is the Nucleophile of the active site. Asn-115 is a glycosylation site (N-linked (GlcNAc...) asparagine). Residue Asp-216 is the Proton acceptor of the active site. The short motif at 216–218 is the DGA/G element; sequence DGA. Residues 361–385 adopt a coiled-coil conformation; the sequence is ETYEEALKRFAKLLSDRKKLRANKA.

The protein belongs to the patatin family. Tuber.

The protein resides in the vacuole. Its function is as follows. Probable lipolytic acyl hydrolase (LAH), an activity which is thought to be involved in the response of tubers to pathogens. This Solanum tuberosum (Potato) protein is Patatin-08.